The chain runs to 1304 residues: Probable inactive serine/threonine-protein kinase fnkC (1304 aa).

The Protein kinase domain occupies 33-402 (FEIIRILKKD…TNLLLTHKFI (370 aa)). Residues 39–47 (LKKDEFSTT) and Lys-68 contribute to the ATP site. A disordered region spans residues 208 to 277 (KDNNNNNNNN…EAEGGGGGGE (70 aa)). Positions 210-269 (NNNNNNNNNNNNNNNNNNNNNNNNNNNNNNANNSNNNTLNNLSIVNNNSSSSSNDNSSEA) are enriched in low complexity. 5 FNIP repeats span residues 514 to 556 (HSKS…LGSD), 710 to 753 (FNQL…FGRC), 754 to 797 (FNQP…FGSQ), 798 to 841 (YNQP…FGES), and 900 to 943 (YNDI…FGCD). MATH domains are found at residues 1025 to 1154 (QGSW…RIDA) and 1172 to 1291 (NQAF…NVSI).

The protein belongs to the protein kinase superfamily. STE Ser/Thr protein kinase family.

This chain is Probable inactive serine/threonine-protein kinase fnkC (fnkC), found in Dictyostelium discoideum (Social amoeba).